An 831-amino-acid chain; its full sequence is MTQNWRPQSRLQTMTFAGTARPMTSMTAAGFTKNPLATAGVASIFDKLPPEPPKDSPEQKADQMEINIFKLLRDGMSAASCKDYVTALGRIREAIKLEQKVSQHRTMNGLADSINLDLRTCIWMHWAQIQALGGQPEMALSTYEKIVKTAEGATLAQIRFNMGNINHNLGKYNEALKNFRMAIDQASPSLPRFRQKIASHMAQSCIKLHRWQDAVDRIEEYLIKQYTLASSVGTDVERQNFYAMTTRFDPLYTVLIGYYALGVPEKMIDAYSRLIDSSILISDHPDSLEIDDHHNGISSKQIAMADAELCNMSNDDELDDLSRYNATLRHEHTNKLLISARLLAPAIAWEESQGYAKLSDILREKGHHGISLQVQMSMALTLLKRNEFEKATDIMLRIDREGLESALALGINVPLSILQKTRNLSLTAAATAVTNQESDLHLLGIDPSVLANQQSVVDRDAVASRGAPEVDMLKTDDDNGTKKQPYAAFVPRGVHTNIAFIYYLKGDYEASARHAQIALEIDPYDSFAHINLGCTYSKTNQWELSLREFLKAQEINMESVQATYNAGLVYFKQQEYKTAYSCFQKVASKLPSYGDAIYMSADCLARMSQIDEAIQMLSNLVTMFSAVKAYDPSIYIRLGELYSIAGDEGQAAHYFKEAHRLVPFSLAVINWLGSHYIKNELYEQARVCFEKASRVDTTTPKWSLAVAACLRKSKQYRDAIYEYKHILKRFPTNTTAMTHLISSLNNIGQHKEADEWAEKLTKLTNNKVPEVTEDRELDEFVKQERRNSVAAVGPGSRAGQDRFEASNNRVSSNTGDLFGDVDIAEELLTEN.

TPR repeat units lie at residues 68-101, 120-153, 156-189, 248-281, 492-525, 526-559, 560-593, 595-627, 632-665, 666-699, and 700-733; these read IFKLLRDGMSAASCKDYVTALGRIREAIKLEQKV, TCIWMHWAQIQALGGQPEMALSTYEKIVKTAEGA, AQIRFNMGNINHNLGKYNEALKNFRMAIDQASPS, FDPLYTVLIGYYALGVPEKMIDAYSRLIDSSILI, RGVHTNIAFIYYLKGDYEASARHAQIALEIDPYD, SFAHINLGCTYSKTNQWELSLREFLKAQEINMES, VQATYNAGLVYFKQQEYKTAYSCFQKVASKLPSY, DAIYMSADCLARMSQIDEAIQMLSNLVTMFSAV, PSIYIRLGELYSIAGDEGQAAHYFKEAHRLVPFS, LAVINWLGSHYIKNELYEQARVCFEKASRVDTTT, and PKWSLAVAACLRKSKQYRDAIYEYKHILKRFPTN. The tract at residues 785 to 816 is disordered; it reads RRNSVAAVGPGSRAGQDRFEASNNRVSSNTGD. Polar residues predominate over residues 805 to 815; it reads ASNNRVSSNTG.

Its subcellular location is the cell projection. The protein localises to the cilium. The protein resides in the flagellum. It is found in the cytoplasm. It localises to the cytoskeleton. Its subcellular location is the flagellum axoneme. The protein localises to the flagellum basal body. Functionally, component of the intraflagellar transport complex B (IFT-B) involved in flagellar assembly. This chain is Intraflagellar transport protein 88, found in Giardia intestinalis (strain ATCC 50803 / WB clone C6) (Giardia lamblia).